Here is a 218-residue protein sequence, read N- to C-terminus: Uracil-DNA glycosylase (218 aa).

Catalysis depends on Asp-68, which acts as the Proton acceptor.

This sequence belongs to the uracil-DNA glycosylase (UDG) superfamily. UNG family. Homodimer. Interacts with protein OPG148. Component of the Uracil-DNA glycosylase(UDG)-OPG148-polymerase complex; OPG148 and UDG form a heterodimeric processivity factor that associates with OPG71 to form the processive polymerase holoenzyme.

The catalysed reaction is Hydrolyzes single-stranded DNA or mismatched double-stranded DNA and polynucleotides, releasing free uracil.. Its function is as follows. Plays an essential role in viral replication as a component of the DNA polymerase processivity factor. Excises uracil residues from the DNA which can arise as a result of misincorporation of dUMP residues by DNA polymerase or due to deamination of cytosine. The polypeptide is Uracil-DNA glycosylase (OPG116) (Bos taurus (Bovine)).